A 149-amino-acid chain; its full sequence is Transcriptional repressor NrdR (149 aa).

A zinc finger lies at 3-34 (CPFCSAVDTKVIDSRLVGDGSQVRRRRQCLVC). The region spanning 49–139 (PRVVKSNGVR…VYRSFEDVRE (91 aa)) is the ATP-cone domain.

Belongs to the NrdR family. Requires Zn(2+) as cofactor.

Its function is as follows. Negatively regulates transcription of bacterial ribonucleotide reductase nrd genes and operons by binding to NrdR-boxes. The protein is Transcriptional repressor NrdR of Edwardsiella ictaluri (strain 93-146).